Consider the following 441-residue polypeptide: MEKSQSSPTKDASTKQKNVDDWLPITSSRNAKWWYSAFHNVTAMVGAGVLSLPYAMSNLGWGPGVTIMIMSWLITFYTLWQMVQMHEMVPGKRFDRYHELGQHAFGEKLGLWIVVPQQLIVEVGVDIVYMVTGGKSLKKIHDLLCTDCKNIRTTYWIMIFASIHFVLAHLPNFNSISIVSLAAAVMSLSYSTIAWATSVKKGVHPNVDYSSRASTTSGNVFNFLNALGDVAFAYAGHNVVLEIQATIPSTPEKPSKIAMWKGVVVAYIVVAICYFPVAFVCYYIFGNSVDDNILMTLEKPIWLIAIANAFVVVHVIGSYQIYAMPVFDMLETFLVKKMMFAPSFKLRFITRTLYVAFTMFVAICIPFFGGLLGFFGGFAFAPTTYYLPCIMWLCIKKPKKYGLSWCINWFCIVVGVILTILAPIGGLRTIIISAKNYEFFS.

Over 1 to 32 (MEKSQSSPTKDASTKQKNVDDWLPITSSRNAK) the chain is Cytoplasmic. The helical transmembrane segment at 33 to 53 (WWYSAFHNVTAMVGAGVLSLP) threads the bilayer. Topologically, residues 54-58 (YAMSN) are extracellular. The helical transmembrane segment at 59–79 (LGWGPGVTIMIMSWLITFYTL) threads the bilayer. Residues 80–110 (WQMVQMHEMVPGKRFDRYHELGQHAFGEKLG) lie on the Cytoplasmic side of the membrane. Residues 111–131 (LWIVVPQQLIVEVGVDIVYMV) traverse the membrane as a helical segment. Residues 132–155 (TGGKSLKKIHDLLCTDCKNIRTTY) are Extracellular-facing. A run of 2 helical transmembrane segments spans residues 156 to 176 (WIMI…FNSI) and 177 to 197 (SIVS…AWAT). Residues 198-222 (SVKKGVHPNVDYSSRASTTSGNVFN) are Extracellular-facing. The chain crosses the membrane as a helical span at residues 223-243 (FLNALGDVAFAYAGHNVVLEI). Residues 244 to 264 (QATIPSTPEKPSKIAMWKGVV) lie on the Cytoplasmic side of the membrane. The helical transmembrane segment at 265–285 (VAYIVVAICYFPVAFVCYYIF) threads the bilayer. Residues 286–300 (GNSVDDNILMTLEKP) are Extracellular-facing. A helical transmembrane segment spans residues 301–321 (IWLIAIANAFVVVHVIGSYQI). Over 322 to 347 (YAMPVFDMLETFLVKKMMFAPSFKLR) the chain is Cytoplasmic. Residues 348–370 (FITRTLYVAFTMFVAICIPFFGG) form a helical membrane-spanning segment. Residues 371-373 (LLG) lie on the Extracellular side of the membrane. A helical transmembrane segment spans residues 374–396 (FFGGFAFAPTTYYLPCIMWLCIK). At 397 to 406 (KPKKYGLSWC) the chain is on the cytoplasmic side. A helical transmembrane segment spans residues 407–427 (INWFCIVVGVILTILAPIGGL). Residues 428–441 (RTIIISAKNYEFFS) lie on the Extracellular side of the membrane.

It belongs to the amino acid/polyamine transporter 2 family. Amino acid/auxin permease (AAAP) (TC 2.A.18.2) subfamily.

The protein localises to the cell membrane. Functionally, amino acid transporter. The protein is Lysine histidine transporter-like 2 of Arabidopsis thaliana (Mouse-ear cress).